The primary structure comprises 611 residues: MSETLERHAFGAEVGRLLDLVVHALYSEREIFLRELVANAADAVDRRRFGALTDPALSLPADAKVRIRPDKAARTLAISDPGIGMSKEDLAQNLGTIARSGTRAFSQSLADAKPDERPSLIGQFGVGFYSAFMVADRVEVTSRKAGSDEAWTWASEGQGEYTLSPATRAEPGTDVVLHIKADADEYLEPLRLETIVRKWADHITVPITLLRDGEEVSGNEGTALWRKPKSEVSEEAYTAFYRHVTHNFDAPWATLHWRAEGALDFTALLFIPGMKPFLAVEEERESRVRLHVRRMFITDEAGLLPSWLRFVQGVVDTEDLPLNVSREMLQATPVLARIRRAVTGKVMAELKSRAKDAESYATFWQAFGPVLKEGIWEDAEHRDDIAALLRFRSTAVEGWTSFADYVSRMKPNQEAIYILVGDDAAALARSAQIEGFRARGIEVLLLSDHVDAFWPERLDKFDGKPIRSITQSADDLSAFAPEGEAAGEAADLTELLPKLKEILKDDVAEVRASQRLVESAVLLSASSGGPDLQMQRLLRRAGRGFGAGLPVLELNPRHALVRRIAERARAGEDVGEAAQTLLDLAHVQGGDPPRDPVAFARRVAAALAAQA.

The tract at residues 1–326 (MSETLERHAF…TEDLPLNVSR (326 aa)) is a; substrate-binding. Residues 327–536 (EMLQATPVLA…SGGPDLQMQR (210 aa)) form a b region. The c stretch occupies residues 537-611 (LLRRAGRGFG…RVAAALAAQA (75 aa)).

Belongs to the heat shock protein 90 family. In terms of assembly, homodimer.

It is found in the cytoplasm. Molecular chaperone. Has ATPase activity. The sequence is that of Chaperone protein HtpG from Methylobacterium sp. (strain 4-46).